We begin with the raw amino-acid sequence, 537 residues long: Myosin-binding protein H (537 aa).

Positions 1 to 25 (MTGKTAPAAAKKAPAAKKAPAPASK) are enriched in low complexity. The disordered stretch occupies residues 1–138 (MTGKTAPAAA…KPKEEPPSVP (138 aa)). The segment covering 26–69 (KAPEPAPKEKPAPTPKEGHAPTPKEEHAPPPKEEHAPPPKEEHA) has biased composition (basic and acidic residues). Positions 87-104 (EQPAAPAAEHAPTPTHEA) are enriched in low complexity. Residues 112-124 (PPPAAPAEAPAPE) are compositionally biased toward pro residues. The 96-residue stretch at 137–232 (VPLSLAVEEV…LEQPVLIREI (96 aa)) folds into the Fibronectin type-III 1 domain. An Ig-like C2-type 1 domain is found at 236-324 (PRIRLPRQLR…NGAEDKAILD (89 aa)). The region spanning 333–428 (PPQNLKLVDV…AAGVAHIKKT (96 aa)) is the Fibronectin type-III 2 domain. An Ig-like C2-type 2 domain is found at 444–528 (PKFTQPLTDR…VNPLGEASVD (85 aa)).

This sequence belongs to the immunoglobulin superfamily. MyBP family. Skeletal muscle. Seems to be also expressed in the slow tonic ald muscle. Not detected in gizzard or heart.

In terms of biological role, binds to myosin; probably involved in interaction with thick myofilaments in the A-band. In Gallus gallus (Chicken), this protein is Myosin-binding protein H (MYBPH).